Reading from the N-terminus, the 115-residue chain is Vitelline membrane protein Vm32E (115 aa).

The N-terminal stretch at 1–17 (MKIVAFTLVAFVALAGA) is a signal peptide. In terms of domain architecture, VM spans 35 to 72 (GYPAPPCPTNYLFSCQPNLAPAPCAQEAPAYGSAGAYT).

It belongs to the vitelline membrane family.

The protein resides in the secreted. Its function is as follows. Major early eggshell protein. The protein is Vitelline membrane protein Vm32E of Drosophila yakuba (Fruit fly).